Consider the following 83-residue polypeptide: Mu-theraphotoxin-Hhn2j 2 (83 aa).

A signal peptide spans 1–21 (MKASMFLALAGLVLLFVVGYA). The propeptide occupies 22–48 (SESEEKEFPIELLSKIFAVDVFKGEDR). Intrachain disulfides connect Cys-50–Cys-65, Cys-57–Cys-70, and Cys-64–Cys-77. Position 81 is a leucine amide (Leu-81).

The protein belongs to the neurotoxin 10 (Hwtx-1) family. 15 (Hntx-3) subfamily. In terms of assembly, monomer. As to expression, expressed by the venom gland.

It is found in the secreted. Functionally, lethal neurotoxin. Selectively blocks tetrodotoxin-sensitive voltage-gated sodium channels (Nav). Does not affect tetrodotoxin-resistant voltage-gated sodium channels or calcium channels. The polypeptide is Mu-theraphotoxin-Hhn2j 2 (Cyriopagopus hainanus (Chinese bird spider)).